The following is a 313-amino-acid chain: D-alanine--D-alanine ligase (313 aa).

In terms of domain architecture, ATP-grasp spans 108–308 (KLVWQQTGVP…YSELVVKVLS (201 aa)). Residue 138–193 (VAKLGLPLFVKPASEGSSVAVLKVKTADALPAALEEAATHDKIVIVEKSIEGGGEY) coordinates ATP. Mg(2+) contacts are provided by aspartate 262, glutamate 275, and asparagine 277.

This sequence belongs to the D-alanine--D-alanine ligase family. Mg(2+) serves as cofactor. Mn(2+) is required as a cofactor.

It is found in the cytoplasm. The enzyme catalyses 2 D-alanine + ATP = D-alanyl-D-alanine + ADP + phosphate + H(+). Its pathway is cell wall biogenesis; peptidoglycan biosynthesis. Its function is as follows. Cell wall formation. This is D-alanine--D-alanine ligase from Burkholderia cenocepacia (strain ATCC BAA-245 / DSM 16553 / LMG 16656 / NCTC 13227 / J2315 / CF5610) (Burkholderia cepacia (strain J2315)).